The chain runs to 295 residues: 3-hydroxy-5-phosphonooxypentane-2,4-dione thiolase (295 aa).

Lys-203 serves as the catalytic Schiff-base intermediate with substrate.

This sequence belongs to the DeoC/FbaB aldolase family. In terms of assembly, homodecamer.

It is found in the cytoplasm. The catalysed reaction is dihydroxyacetone phosphate + acetyl-CoA = 3-hydroxy-2,4-dioxopentyl phosphate + CoA. Its function is as follows. Involved in the degradation of phospho-AI-2, thereby terminating induction of the lsr operon and closing the AI-2 signaling cycle. Catalyzes the transfer of an acetyl moiety from 3-hydroxy-5-phosphonooxypentane-2,4-dione to CoA to form glycerone phosphate and acetyl-CoA. This chain is 3-hydroxy-5-phosphonooxypentane-2,4-dione thiolase, found in Enterobacter sp. (strain 638).